We begin with the raw amino-acid sequence, 203 residues long: Large ribosomal subunit protein bL25 (203 aa).

This sequence belongs to the bacterial ribosomal protein bL25 family. CTC subfamily. In terms of assembly, part of the 50S ribosomal subunit; part of the 5S rRNA/L5/L18/L25 subcomplex. Contacts the 5S rRNA. Binds to the 5S rRNA independently of L5 and L18.

Functionally, this is one of the proteins that binds to the 5S RNA in the ribosome where it forms part of the central protuberance. This Pseudomonas syringae pv. tomato (strain ATCC BAA-871 / DC3000) protein is Large ribosomal subunit protein bL25.